The primary structure comprises 187 residues: Threonylcarbamoyl-AMP synthase (187 aa).

Residues 4 to 187 (TPDLDAAVAT…DARTGQILRD (184 aa)) form the YrdC-like domain.

Belongs to the SUA5 family. TsaC subfamily.

The protein localises to the cytoplasm. It catalyses the reaction L-threonine + hydrogencarbonate + ATP = L-threonylcarbamoyladenylate + diphosphate + H2O. In terms of biological role, required for the formation of a threonylcarbamoyl group on adenosine at position 37 (t(6)A37) in tRNAs that read codons beginning with adenine. Catalyzes the conversion of L-threonine, HCO(3)(-)/CO(2) and ATP to give threonylcarbamoyl-AMP (TC-AMP) as the acyladenylate intermediate, with the release of diphosphate. The polypeptide is Threonylcarbamoyl-AMP synthase (Xanthomonas campestris pv. campestris (strain 8004)).